The primary structure comprises 152 residues: MTEYKKVIAQNKKALFNYFIEERLEAGIVLKGSEVQSLRQGKASIEESHAADTGHEVFLYNCHIAEYEKANRFNHSTRRPRKLLLHTKEIKKIIGRIRIKGYTLVALSMYFNKKNKVKVELGIAKGKKLHDKRESIKEKDWKRDQSRLIRQK.

Belongs to the SmpB family.

Its subcellular location is the cytoplasm. Required for rescue of stalled ribosomes mediated by trans-translation. Binds to transfer-messenger RNA (tmRNA), required for stable association of tmRNA with ribosomes. tmRNA and SmpB together mimic tRNA shape, replacing the anticodon stem-loop with SmpB. tmRNA is encoded by the ssrA gene; the 2 termini fold to resemble tRNA(Ala) and it encodes a 'tag peptide', a short internal open reading frame. During trans-translation Ala-aminoacylated tmRNA acts like a tRNA, entering the A-site of stalled ribosomes, displacing the stalled mRNA. The ribosome then switches to translate the ORF on the tmRNA; the nascent peptide is terminated with the 'tag peptide' encoded by the tmRNA and targeted for degradation. The ribosome is freed to recommence translation, which seems to be the essential function of trans-translation. The protein is SsrA-binding protein of Rickettsia felis (strain ATCC VR-1525 / URRWXCal2) (Rickettsia azadi).